We begin with the raw amino-acid sequence, 176 residues long: Bifunctional protein PyrR (176 aa).

A PRPP-binding motif is present at residues 93–105; sequence VILVDDVLYTGRT.

Belongs to the purine/pyrimidine phosphoribosyltransferase family. PyrR subfamily. In terms of assembly, homodimer and homohexamer; in equilibrium.

The catalysed reaction is UMP + diphosphate = 5-phospho-alpha-D-ribose 1-diphosphate + uracil. Regulates transcriptional attenuation of the pyrimidine nucleotide (pyr) operon by binding in a uridine-dependent manner to specific sites on pyr mRNA. This disrupts an antiterminator hairpin in the RNA and favors formation of a downstream transcription terminator, leading to a reduced expression of downstream genes. In terms of biological role, also displays a weak uracil phosphoribosyltransferase activity which is not physiologically significant. In Streptococcus mutans serotype c (strain ATCC 700610 / UA159), this protein is Bifunctional protein PyrR.